The following is a 478-amino-acid chain: Protein ZINC INDUCED FACILITATOR-LIKE 1 (478 aa).

The next 12 membrane-spanning stretches (helical) occupy residues 43–63 (IIVL…YFMI), 81–101 (FVGC…GLVA), 108–128 (PVIL…GLSL), 130–150 (FWMA…LGPI), 169–189 (AVST…GFLA), 208–228 (FPFF…TIVS), 280–300 (IIVY…FSLW), 317–337 (VGSV…SLYS), 346–367 (IIVT…PLIA), 378–398 (VTSA…GLFI), 415–435 (IAMT…GIIF), and 453–473 (VFFI…KPFL).

This sequence belongs to the major facilitator superfamily. In terms of tissue distribution, predominantly expressed in roots and stomatal guard cells. Detected in anther stamen filaments and shoot apical meristem. In the mature portion of roots, restricted to the cortex. At the root tip, highly expressed in both the cortical and epidermal cell layers of the apical meristem and the transition zone, while absent from the quiescent center or the columella cells. Not detected in lateral root primordia.

It is found in the cell membrane. It localises to the vacuole membrane. Its function is as follows. Major facilitator superfamily (MFS) transporter probably involved in 2,4-dichlorophenoxyacetic acid (2,4-D) export. K(+) may be the physiological substrate of the transporter. In terms of biological role, modulates root auxin-related processes. Involved in auxin efflux and acts as a positive regulator of shootward transport at the root apex. May mediate proton efflux from the vacuolar compartment. Mediates drought stress tolerance by regulating stomatal closure. This is Protein ZINC INDUCED FACILITATOR-LIKE 1 (ZIFL1) from Arabidopsis thaliana (Mouse-ear cress).